Consider the following 126-residue polypeptide: Glycine cleavage system H protein (126 aa).

A Lipoyl-binding domain is found at 22 to 104 (VATIGITEYA…YEKAWMVKVE (83 aa)). The residue at position 63 (Lys-63) is an N6-lipoyllysine.

It belongs to the GcvH family. In terms of assembly, the glycine cleavage system is composed of four proteins: P, T, L and H. Requires (R)-lipoate as cofactor.

In terms of biological role, the glycine cleavage system catalyzes the degradation of glycine. The H protein shuttles the methylamine group of glycine from the P protein to the T protein. Is also involved in protein lipoylation via its role as an octanoyl/lipoyl carrier protein intermediate. This Staphylococcus aureus (strain MSSA476) protein is Glycine cleavage system H protein.